The chain runs to 339 residues: Ketol-acid reductoisomerase (NADP(+)) (339 aa).

The KARI N-terminal Rossmann domain occupies 1–182 (MRVYYDRDAD…GGGRAGIIET (182 aa)). NADP(+) is bound by residues 24–27 (YGSQ), Arg-48, Ser-51, Thr-53, and 83–86 (DELQ). The active site involves His-108. An NADP(+)-binding site is contributed by Gly-134. The 146-residue stretch at 183–328 (SFKEECETDL…AKLRDMMPWI (146 aa)) folds into the KARI C-terminal knotted domain. Mg(2+) is bound by residues Asp-191, Glu-195, Glu-227, and Glu-231. Position 252 (Ser-252) interacts with substrate.

The protein belongs to the ketol-acid reductoisomerase family. Mg(2+) serves as cofactor.

The catalysed reaction is (2R)-2,3-dihydroxy-3-methylbutanoate + NADP(+) = (2S)-2-acetolactate + NADPH + H(+). It carries out the reaction (2R,3R)-2,3-dihydroxy-3-methylpentanoate + NADP(+) = (S)-2-ethyl-2-hydroxy-3-oxobutanoate + NADPH + H(+). It participates in amino-acid biosynthesis; L-isoleucine biosynthesis; L-isoleucine from 2-oxobutanoate: step 2/4. It functions in the pathway amino-acid biosynthesis; L-valine biosynthesis; L-valine from pyruvate: step 2/4. Functionally, involved in the biosynthesis of branched-chain amino acids (BCAA). Catalyzes an alkyl-migration followed by a ketol-acid reduction of (S)-2-acetolactate (S2AL) to yield (R)-2,3-dihydroxy-isovalerate. In the isomerase reaction, S2AL is rearranged via a Mg-dependent methyl migration to produce 3-hydroxy-3-methyl-2-ketobutyrate (HMKB). In the reductase reaction, this 2-ketoacid undergoes a metal-dependent reduction by NADPH to yield (R)-2,3-dihydroxy-isovalerate. The chain is Ketol-acid reductoisomerase (NADP(+)) from Rhodopseudomonas palustris (strain HaA2).